The primary structure comprises 31 residues: Cycloviolacin-O23 (31 aa).

A cross-link (cyclopeptide (Gly-Asn)) is located at residues 1-31; the sequence is GLPTCGETCFGGTCNTPGCTCDSSWPICTHN. Disulfide bonds link Cys5–Cys19, Cys9–Cys21, and Cys14–Cys28.

In terms of processing, this is a cyclic peptide. As to expression, expressed in leaves but not in petals, petioles, roots and runners (at protein level).

Functionally, probably participates in a plant defense mechanism. This chain is Cycloviolacin-O23, found in Viola odorata (Sweet violet).